Reading from the N-terminus, the 360-residue chain is Photosystem II protein D1 2 (360 aa).

The next 3 helical transmembrane spans lie at 29–46, 118–133, and 142–156; these read YVGW…TATT, HFLI…EWEL, and WICV…AATA. H118 is a chlorophyll a binding site. Y126 serves as a coordination point for pheophytin a. D170 and E189 together coordinate [CaMn4O5] cluster. Residues 197-218 form a helical membrane-spanning segment; that stretch reads FHMLGVAGVFGGSLFSAMHGSL. Position 198 (H198) interacts with chlorophyll a. Residues H215 and 264 to 265 contribute to the a quinone site; that span reads SF. H215 contacts Fe cation. H272 contacts Fe cation. Residues 274-288 traverse the membrane as a helical segment; sequence FLGAWPVVGIWFTAL. Residues H332, E333, D342, and A344 each contribute to the [CaMn4O5] cluster site. A propeptide spanning residues 345-360 is cleaved from the precursor; it reads AGEQAPVALQAPAING.

Belongs to the reaction center PufL/M/PsbA/D family. PSII is composed of 1 copy each of membrane proteins PsbA, PsbB, PsbC, PsbD, PsbE, PsbF, PsbH, PsbI, PsbJ, PsbK, PsbL, PsbM, PsbT, PsbX, PsbY, PsbZ, Psb30/Ycf12, peripheral proteins PsbO, CyanoQ (PsbQ), PsbU, PsbV and a large number of cofactors. It forms dimeric complexes. It depends on The D1/D2 heterodimer binds P680, chlorophylls that are the primary electron donor of PSII, and subsequent electron acceptors. It shares a non-heme iron and each subunit binds pheophytin, quinone, additional chlorophylls, carotenoids and lipids. D1 provides most of the ligands for the Mn4-Ca-O5 cluster of the oxygen-evolving complex (OEC). There is also a Cl(-1) ion associated with D1 and D2, which is required for oxygen evolution. The PSII complex binds additional chlorophylls, carotenoids and specific lipids. as a cofactor. In terms of processing, tyr-161 forms a radical intermediate that is referred to as redox-active TyrZ, YZ or Y-Z. C-terminally processed by CtpA; processing is essential to allow assembly of the oxygen-evolving complex and thus photosynthetic growth.

It localises to the cellular thylakoid membrane. It catalyses the reaction 2 a plastoquinone + 4 hnu + 2 H2O = 2 a plastoquinol + O2. Its function is as follows. Photosystem II (PSII) is a light-driven water:plastoquinone oxidoreductase that uses light energy to abstract electrons from H(2)O, generating O(2) and a proton gradient subsequently used for ATP formation. It consists of a core antenna complex that captures photons, and an electron transfer chain that converts photonic excitation into a charge separation. The D1/D2 (PsbA/PsbD) reaction center heterodimer binds P680, the primary electron donor of PSII as well as several subsequent electron acceptors. This Picosynechococcus sp. (strain ATCC 27264 / PCC 7002 / PR-6) (Agmenellum quadruplicatum) protein is Photosystem II protein D1 2.